A 546-amino-acid chain; its full sequence is (+)-epi-alpha-bisabolol synthase (546 aa).

5 residues coordinate Mg(2+): Asp-297, Asp-301, Asp-441, Thr-445, and Glu-449. The short motif at 297–301 is the DDXXD motif element; it reads DDIYD.

The protein belongs to the terpene synthase family. The cofactor is Mg(2+).

The enzyme catalyses (2E,6E)-farnesyl diphosphate + H2O = (+)-epi-alpha-bisabolol + diphosphate. Its pathway is secondary metabolite biosynthesis; terpenoid biosynthesis. Its function is as follows. Sesquiterpene synthase involved in the biosynthesis of (+)-epi-alpha-bisabolol, a precursor of the natural sweetner hernandulcin. The sequence is that of (+)-epi-alpha-bisabolol synthase from Phyla dulcis (Aztec sweet herb).